We begin with the raw amino-acid sequence, 402 residues long: Arginine biosynthesis bifunctional protein ArgJ (402 aa).

The substrate site is built by threonine 152, lysine 178, threonine 189, glutamate 275, asparagine 397, and threonine 402. The active-site Nucleophile is threonine 189.

It belongs to the ArgJ family. Heterotetramer of two alpha and two beta chains.

Its subcellular location is the cytoplasm. It catalyses the reaction N(2)-acetyl-L-ornithine + L-glutamate = N-acetyl-L-glutamate + L-ornithine. The catalysed reaction is L-glutamate + acetyl-CoA = N-acetyl-L-glutamate + CoA + H(+). Its pathway is amino-acid biosynthesis; L-arginine biosynthesis; L-ornithine and N-acetyl-L-glutamate from L-glutamate and N(2)-acetyl-L-ornithine (cyclic): step 1/1. The protein operates within amino-acid biosynthesis; L-arginine biosynthesis; N(2)-acetyl-L-ornithine from L-glutamate: step 1/4. In terms of biological role, catalyzes two activities which are involved in the cyclic version of arginine biosynthesis: the synthesis of N-acetylglutamate from glutamate and acetyl-CoA as the acetyl donor, and of ornithine by transacetylation between N(2)-acetylornithine and glutamate. The chain is Arginine biosynthesis bifunctional protein ArgJ from Symbiobacterium thermophilum (strain DSM 24528 / JCM 14929 / IAM 14863 / T).